A 188-amino-acid chain; its full sequence is Acireductone dioxygenase (188 aa).

Residues His-97, His-99, Glu-103, and His-141 each contribute to the Fe(2+) site. Ni(2+) contacts are provided by His-97, His-99, Glu-103, and His-141.

This sequence belongs to the acireductone dioxygenase (ARD) family. As to quaternary structure, monomer. Fe(2+) serves as cofactor. Ni(2+) is required as a cofactor.

The enzyme catalyses 1,2-dihydroxy-5-(methylsulfanyl)pent-1-en-3-one + O2 = 3-(methylsulfanyl)propanoate + CO + formate + 2 H(+). It carries out the reaction 1,2-dihydroxy-5-(methylsulfanyl)pent-1-en-3-one + O2 = 4-methylsulfanyl-2-oxobutanoate + formate + 2 H(+). It functions in the pathway amino-acid biosynthesis; L-methionine biosynthesis via salvage pathway; L-methionine from S-methyl-5-thio-alpha-D-ribose 1-phosphate: step 5/6. Its function is as follows. Catalyzes 2 different reactions between oxygen and the acireductone 1,2-dihydroxy-3-keto-5-methylthiopentene (DHK-MTPene) depending upon the metal bound in the active site. Fe-containing acireductone dioxygenase (Fe-ARD) produces formate and 2-keto-4-methylthiobutyrate (KMTB), the alpha-ketoacid precursor of methionine in the methionine recycle pathway. Ni-containing acireductone dioxygenase (Ni-ARD) produces methylthiopropionate, carbon monoxide and formate, and does not lie on the methionine recycle pathway. The protein is Acireductone dioxygenase of Xylella fastidiosa (strain 9a5c).